We begin with the raw amino-acid sequence, 251 residues long: 5-oxoprolinase subunit A 3 (251 aa).

The protein belongs to the LamB/PxpA family. As to quaternary structure, forms a complex composed of PxpA, PxpB and PxpC.

It catalyses the reaction 5-oxo-L-proline + ATP + 2 H2O = L-glutamate + ADP + phosphate + H(+). Catalyzes the cleavage of 5-oxoproline to form L-glutamate coupled to the hydrolysis of ATP to ADP and inorganic phosphate. The polypeptide is 5-oxoprolinase subunit A 3 (Pseudomonas aeruginosa (strain ATCC 15692 / DSM 22644 / CIP 104116 / JCM 14847 / LMG 12228 / 1C / PRS 101 / PAO1)).